Consider the following 210-residue polypeptide: Selenoprotein T2 (210 aa).

An N-terminal signal peptide occupies residues 1–21 (MAEYSQTGILTALLLFTVVTV). The segment at residues 62–65 (CISU) is a cross-link (cysteinyl-selenocysteine (Cys-Sec)). Sec65 is a non-standard amino acid (selenocysteine).

It belongs to the SelWTH family. Selenoprotein T subfamily. Post-translationally, may contain a selenide-sulfide bond between Cys-62 and Sec-65. This bond is speculated to serve as redox-active pair. Widely expressed in the embryo.

This chain is Selenoprotein T2, found in Danio rerio (Zebrafish).